The primary structure comprises 221 residues: MEDEPGSENEADTIVASPLAKWRIEFSKSFQNYLDRSAPNIVRRWLVTLVAAVIYIYRVYSVYGYFVISYGLATYILNLLIGFLSPKVDPELEALDPDSLPVDESDEYKPFVRRLPEFKFWYAATKAFVVAFVMTFFSFLDVPVFWPILLCYWLVLYSLTMKRLIVHMFKYRYFPFDVRKPVKLLKFLVNSVLTFLRLKKGDGGDDRPSSSNSSQGNEKQD.

4 consecutive transmembrane segments (helical) span residues Ile-41–Arg-58, Gly-64–Leu-84, Phe-128–Ile-148, and Leu-149–Phe-169. The segment at Lys-200–Asp-221 is disordered. The segment covering Ser-209–Asp-221 has biased composition (polar residues).

Belongs to the RER1 family.

The protein resides in the membrane. Involved in the retrieval of endoplasmic reticulum membrane proteins from the early Golgi compartment. This is Protein RER1D from Arabidopsis thaliana (Mouse-ear cress).